The following is a 367-amino-acid chain: MTSRNYLLLTPGPLTTSRTVKEAMLFDSCTWDDDYNIGVVEQIRQQLTALATASEGYTSVLLQGSGSYAVEAVLGSALGPQDKVLIVSNGAYGARMVEMAGLMGIAHHAYDCGEVARPDVQAIDAILNVDPTISHIAMVHSETTTGMLNPIDEVGALAHRYGKTYIVDAMSSFGGIPMDIAALHIDYLISSANKCIQGVPGFAFVIAREQKLAACKGRSRSLSLDLYAQWRCMEDNHGKWRFTSPTHTVLAFAQALKELAKEGGVAARHQRYQQNQRSLVAGMRALGFNTLLDDELHSPIITAFYSPEDPQYRFSEFYRRLKEQGFVIYPGKVSQSDCFRIGNIGEVYAADITALLTAIRTAMYWTK.

K194 carries the N6-(pyridoxal phosphate)lysine modification.

This sequence belongs to the class-V pyridoxal-phosphate-dependent aminotransferase family. PhnW subfamily. As to quaternary structure, homodimer. It depends on pyridoxal 5'-phosphate as a cofactor.

The enzyme catalyses (2-aminoethyl)phosphonate + pyruvate = phosphonoacetaldehyde + L-alanine. In terms of biological role, involved in phosphonate degradation. This Salmonella paratyphi A (strain ATCC 9150 / SARB42) protein is 2-aminoethylphosphonate--pyruvate transaminase.